A 154-amino-acid polypeptide reads, in one-letter code: UPF0178 protein Sala_2376 (154 aa).

The protein belongs to the UPF0178 family.

This Sphingopyxis alaskensis (strain DSM 13593 / LMG 18877 / RB2256) (Sphingomonas alaskensis) protein is UPF0178 protein Sala_2376.